The primary structure comprises 491 residues: UDP-N-acetylmuramate--L-alanine ligase (491 aa).

126-132 contributes to the ATP binding site; it reads GTHGKTT.

Belongs to the MurCDEF family.

Its subcellular location is the cytoplasm. The enzyme catalyses UDP-N-acetyl-alpha-D-muramate + L-alanine + ATP = UDP-N-acetyl-alpha-D-muramoyl-L-alanine + ADP + phosphate + H(+). It participates in cell wall biogenesis; peptidoglycan biosynthesis. Functionally, cell wall formation. This is UDP-N-acetylmuramate--L-alanine ligase from Salmonella paratyphi C (strain RKS4594).